We begin with the raw amino-acid sequence, 548 residues long: Nodulation protein NolO (548 aa).

It belongs to the NodU/CmcH family.

Functionally, involved in 6-O-carbamoylation of Nod-factors. The sequence is that of Nodulation protein NolO (nolO) from Bradyrhizobium diazoefficiens (strain JCM 10833 / BCRC 13528 / IAM 13628 / NBRC 14792 / USDA 110).